The primary structure comprises 66 residues: Large ribosomal subunit protein bL35 (66 aa).

The segment covering 1 to 26 (MPKMKTHRGAAKRFKKTGTGKLKRGH) has biased composition (basic residues). The interval 1–48 (MPKMKTHRGAAKRFKKTGTGKLKRGHAYTSHLFANKTQKQKRKLRKAT) is disordered.

The protein belongs to the bacterial ribosomal protein bL35 family.

The polypeptide is Large ribosomal subunit protein bL35 (Geobacillus sp. (strain WCH70)).